Reading from the N-terminus, the 560-residue chain is Dihydroxy-acid dehydratase (560 aa).

Residue Asp80 coordinates Mg(2+). Residue Cys121 participates in [2Fe-2S] cluster binding. The Mg(2+) site is built by Asp122 and Lys123. Position 123 is an N6-carboxylysine (Lys123). Position 194 (Cys194) interacts with [2Fe-2S] cluster. Glu447 is a Mg(2+) binding site. Ser473 acts as the Proton acceptor in catalysis.

It belongs to the IlvD/Edd family. In terms of assembly, homodimer. [2Fe-2S] cluster serves as cofactor. Mg(2+) is required as a cofactor.

The enzyme catalyses (2R)-2,3-dihydroxy-3-methylbutanoate = 3-methyl-2-oxobutanoate + H2O. It carries out the reaction (2R,3R)-2,3-dihydroxy-3-methylpentanoate = (S)-3-methyl-2-oxopentanoate + H2O. It participates in amino-acid biosynthesis; L-isoleucine biosynthesis; L-isoleucine from 2-oxobutanoate: step 3/4. Its pathway is amino-acid biosynthesis; L-valine biosynthesis; L-valine from pyruvate: step 3/4. Functionally, functions in the biosynthesis of branched-chain amino acids. Catalyzes the dehydration of (2R,3R)-2,3-dihydroxy-3-methylpentanoate (2,3-dihydroxy-3-methylvalerate) into 2-oxo-3-methylpentanoate (2-oxo-3-methylvalerate) and of (2R)-2,3-dihydroxy-3-methylbutanoate (2,3-dihydroxyisovalerate) into 2-oxo-3-methylbutanoate (2-oxoisovalerate), the penultimate precursor to L-isoleucine and L-valine, respectively. In Chloroherpeton thalassium (strain ATCC 35110 / GB-78), this protein is Dihydroxy-acid dehydratase.